We begin with the raw amino-acid sequence, 436 residues long: GTPase Der (436 aa).

2 consecutive EngA-type G domains span residues 4 to 167 (PVVA…KNIP) and 176 to 351 (VQFC…ENHS). GTP contacts are provided by residues 10–17 (GRPNVGKS), 57–61 (DTGGI), 119–122 (NKLD), 182–189 (GRPNVGKS), 229–233 (DTAGM), and 294–297 (NKWD). In terms of domain architecture, KH-like spans 352 to 436 (LRVQTNVLND…PIKIFARARK (85 aa)).

It belongs to the TRAFAC class TrmE-Era-EngA-EngB-Septin-like GTPase superfamily. EngA (Der) GTPase family. In terms of assembly, associates with the 50S ribosomal subunit.

Functionally, GTPase that plays an essential role in the late steps of ribosome biogenesis. This chain is GTPase Der, found in Bacillus velezensis (strain DSM 23117 / BGSC 10A6 / LMG 26770 / FZB42) (Bacillus amyloliquefaciens subsp. plantarum).